The sequence spans 403 residues: Phosphoglycerate kinase (403 aa).

Substrate is bound by residues 22–24, arginine 37, 60–63, arginine 119, and arginine 152; these read DFN and HFGR. ATP is bound by residues lysine 202, glutamate 324, and 354–357; that span reads GGDT.

Belongs to the phosphoglycerate kinase family. Monomer.

Its subcellular location is the cytoplasm. The catalysed reaction is (2R)-3-phosphoglycerate + ATP = (2R)-3-phospho-glyceroyl phosphate + ADP. The protein operates within carbohydrate degradation; glycolysis; pyruvate from D-glyceraldehyde 3-phosphate: step 2/5. This Maricaulis maris (strain MCS10) (Caulobacter maris) protein is Phosphoglycerate kinase.